The sequence spans 216 residues: Uracil phosphoribosyltransferase (216 aa).

30-34 (KNLVK) provides a ligand contact to GTP. 5-phospho-alpha-D-ribose 1-diphosphate-binding positions include Arg80, Arg105, and 140 to 148 (DPMIATGST). Uracil-binding positions include Ile203 and 208 to 210 (GDA). Asp209 is a 5-phospho-alpha-D-ribose 1-diphosphate binding site.

This sequence belongs to the UPRTase family. Mg(2+) serves as cofactor.

It catalyses the reaction UMP + diphosphate = 5-phospho-alpha-D-ribose 1-diphosphate + uracil. Its pathway is pyrimidine metabolism; UMP biosynthesis via salvage pathway; UMP from uracil: step 1/1. Its activity is regulated as follows. Allosterically activated by GTP. Functionally, catalyzes the conversion of uracil and 5-phospho-alpha-D-ribose 1-diphosphate (PRPP) to UMP and diphosphate. The polypeptide is Uracil phosphoribosyltransferase (Sulfolobus acidocaldarius (strain ATCC 33909 / DSM 639 / JCM 8929 / NBRC 15157 / NCIMB 11770)).